The sequence spans 192 residues: E3 ubiquitin-protein ligase RNF185 (192 aa).

A compositionally biased stretch (low complexity) spans 1 to 27 (MASKGPSASASPENSSAGGPSGSSNGA). The segment at 1–30 (MASKGPSASASPENSSAGGPSGSSNGAGES) is disordered. The Cytoplasmic segment spans residues 1-130 (MASKGPSASA…GGFQGFGFGD (130 aa)). The required for ubiquitin ligase activity and protection against ER stress-induced cell death stretch occupies residues 29–80 (ESGGQDSTFECNICLDTAKDAVISLCGHLFCWPCLHQWLETRPNRQVCPVCK). The RING-type zinc-finger motif lies at 39–80 (CNICLDTAKDAVISLCGHLFCWPCLHQWLETRPNRQVCPVCK). A disordered region spans residues 90 to 123 (PLYGRGSTGQQDPREKTPPRPQGQRPEPENRGGF). A helical transmembrane segment spans residues 131–151 (GGFQMSFGIGAFPFGIFATAF). Residues 152–171 (NINDGRPPPAVPGTPQYVDE) are Mitochondrial intermembrane-facing. A helical membrane pass occupies residues 172–192 (QFLSRLFLFVALVIMFWLLIA).

As to quaternary structure, interacts with ATG5 and BNIP1. Ubiquitously expressed.

The protein localises to the mitochondrion outer membrane. It localises to the endoplasmic reticulum membrane. The catalysed reaction is S-ubiquitinyl-[E2 ubiquitin-conjugating enzyme]-L-cysteine + [acceptor protein]-L-lysine = [E2 ubiquitin-conjugating enzyme]-L-cysteine + N(6)-ubiquitinyl-[acceptor protein]-L-lysine.. The protein operates within protein modification; protein ubiquitination. In terms of biological role, E3 ubiquitin-protein ligase that regulates selective mitochondrial autophagy by mediating 'Lys-63'-linked polyubiquitination of BNIP1. Acts in the endoplasmic reticulum (ER)-associated degradation (ERAD) pathway, which targets misfolded proteins that accumulate in the endoplasmic reticulum (ER) for ubiquitination and subsequent proteasome-mediated degradation. Protects cells from ER stress-induced apoptosis. Responsible for the cotranslational ubiquitination and degradation of CFTR in the ERAD pathway. Also acts as a regulator of the innate antiviral response by catalyzing 'Lys-27'-linked polyubiquitination of CGAS at 'Lys-173' and 'Lys-384', thereby promoting CGAS cyclic GMP-AMP synthase activity. Preferentially associates with the E2 enzymes UBE2J1 and UBE2J2. The polypeptide is E3 ubiquitin-protein ligase RNF185 (Homo sapiens (Human)).